Here is a 116-residue protein sequence, read N- to C-terminus: Protein Rev (116 aa).

Phosphoserine; by host CK2 is present on residues Ser5 and Ser8. The homomultimerization stretch occupies residues 18–26 (YIKILYQSN). Positions 26–48 (NPYPKPEGTRQARRNRRRRWRAR) are disordered. Positions 34 to 50 (TRQARRNRRRRWRARQR) match the Nuclear localization signal and RNA-binding (RRE) motif. Residues 36-48 (QARRNRRRRWRAR) are compositionally biased toward basic residues. The Nuclear export signal and binding to XPO1 signature appears at 73–84 (LQLPPLERLHIN). Positions 89–116 (CGQGAEEGVGSSQISGESHTVLGSGTKE) are disordered. Polar residues predominate over residues 98–116 (GSSQISGESHTVLGSGTKE). Ser99 is modified (phosphoserine; by host).

It belongs to the HIV-1 REV protein family. Homomultimer; when bound to the RRE. Multimeric assembly is essential for activity and may involve XPO1. Binds to human KPNB1, XPO1, TNPO1, RANBP5 and IPO7. Interacts with the viral Integrase. Interacts with human KHDRBS1. Interacts with human NAP1; this interaction decreases Rev multimerization and stimulates its activity. Interacts with human DEAD-box helicases DDX3 and DDX24; these interactions may serve for viral RNA export to the cytoplasm and packaging, respectively. Interacts with human PSIP1; this interaction may inhibit HIV-1 DNA integration by promoting dissociation of the Integrase-LEDGF/p75 complex. In terms of processing, asymmetrically arginine dimethylated at one site by host PRMT6. Methylation impairs the RNA-binding activity and export of viral RNA from the nucleus to the cytoplasm. Phosphorylated by protein kinase CK2. Presence of, and maybe binding to the N-terminus of the regulatory beta subunit of CK2 is necessary for CK2-mediated Rev's phosphorylation.

Its subcellular location is the host nucleus. It localises to the host nucleolus. The protein resides in the host cytoplasm. Escorts unspliced or incompletely spliced viral pre-mRNAs (late transcripts) out of the nucleus of infected cells. These pre-mRNAs carry a recognition sequence called Rev responsive element (RRE) located in the env gene, that is not present in fully spliced viral mRNAs (early transcripts). This function is essential since most viral proteins are translated from unspliced or partially spliced pre-mRNAs which cannot exit the nucleus by the pathway used by fully processed cellular mRNAs. Rev itself is translated from a fully spliced mRNA that readily exits the nucleus. Rev's nuclear localization signal (NLS) binds directly to KPNB1/Importin beta-1 without previous binding to KPNA1/Importin alpha-1. KPNB1 binds to the GDP bound form of RAN (Ran-GDP) and targets Rev to the nucleus. In the nucleus, the conversion from Ran-GDP to Ran-GTP dissociates Rev from KPNB1 and allows Rev's binding to the RRE in viral pre-mRNAs. Rev multimerization on the RRE via cooperative assembly exposes its nuclear export signal (NES) to the surface. Rev can then form a complex with XPO1/CRM1 and Ran-GTP, leading to nuclear export of the complex. Conversion from Ran-GTP to Ran-GDP mediates dissociation of the Rev/RRE/XPO1/RAN complex, so that Rev can return to the nucleus for a subsequent round of export. Beside KPNB1, also seems to interact with TNPO1/Transportin-1, RANBP5/IPO5 and IPO7/RANBP7 for nuclear import. The nucleoporin-like HRB/RIP is an essential cofactor that probably indirectly interacts with Rev to release HIV RNAs from the perinuclear region to the cytoplasm. This chain is Protein Rev, found in Homo sapiens (Human).